Here is a 381-residue protein sequence, read N- to C-terminus: Queuine tRNA-ribosyltransferase (381 aa).

Asp92 (proton acceptor) is an active-site residue. Residues 92–96 (DSGGF), Asp146, Gln190, and Gly217 each bind substrate. Residues 248 to 254 (GVGRPED) are RNA binding. The active-site Nucleophile is the Asp267. Residues 272-276 (TRNAR) are RNA binding; important for wobble base 34 recognition. Residues Cys305, Cys307, Cys310, and His337 each contribute to the Zn(2+) site.

Belongs to the queuine tRNA-ribosyltransferase family. In terms of assembly, homodimer. Within each dimer, one monomer is responsible for RNA recognition and catalysis, while the other monomer binds to the replacement base PreQ1. Zn(2+) is required as a cofactor.

The enzyme catalyses 7-aminomethyl-7-carbaguanine + guanosine(34) in tRNA = 7-aminomethyl-7-carbaguanosine(34) in tRNA + guanine. It functions in the pathway tRNA modification; tRNA-queuosine biosynthesis. Its function is as follows. Catalyzes the base-exchange of a guanine (G) residue with the queuine precursor 7-aminomethyl-7-deazaguanine (PreQ1) at position 34 (anticodon wobble position) in tRNAs with GU(N) anticodons (tRNA-Asp, -Asn, -His and -Tyr). Catalysis occurs through a double-displacement mechanism. The nucleophile active site attacks the C1' of nucleotide 34 to detach the guanine base from the RNA, forming a covalent enzyme-RNA intermediate. The proton acceptor active site deprotonates the incoming PreQ1, allowing a nucleophilic attack on the C1' of the ribose to form the product. After dissociation, two additional enzymatic reactions on the tRNA convert PreQ1 to queuine (Q), resulting in the hypermodified nucleoside queuosine (7-(((4,5-cis-dihydroxy-2-cyclopenten-1-yl)amino)methyl)-7-deazaguanosine). The protein is Queuine tRNA-ribosyltransferase of Xanthomonas campestris pv. campestris (strain B100).